A 382-amino-acid chain; its full sequence is Prolargin (382 aa).

Positions 1–20 are cleaved as a signal peptide; the sequence is MRSPLCWLLPLLILASVAQG. Residues 19 to 66 form a disordered region; it reads QGQPTRRPRPGTGPGRRPRPRPRPTPSFPQPDEPAEPTDLPPPLPPGP. Composition is skewed to pro residues over residues 41–50 and 57–66; these read RPTPSFPQPD and DLPPPLPPGP. LRR repeat units follow at residues 95–114, 115–138, 139–162, 163–183, 184–207, 208–233, 234–254, 255–278, 279–303, 304–323, 324–362, and 363–382; these read RKVPVIPPRIHYLYLQNNFI, TELPVESFQNATGLRWINLDNNRI, RKIDQRVLEKLPGLVFLYMEKNQL, EEVPSALPRNLEQLRLSQNHI, SRIPPGVFSKLENLLLLDLQHNRL, SDGVFKPDTFHGLKNLMQLNLAHNIL, RKMPPRVPTAIHQLYLDSNKI, ETIPNGYFKSFPNLAFIRLNYNKL, TDRGLPKNSFNISNLLVLHLSHNRI, SSVPAINNRLEHLYLNNNSI, EKINGTQICPNDLVAFHDFSSDLENVPHLRYLRLDGNYL, and KPPIPLDLMMCFRLLQSVVI. Asn124 carries an N-linked (GlcNAc...) asparagine glycan. Asn289, Asn320, and Asn327 each carry an N-linked (GlcNAc...) asparagine glycan. Residues Cys332 and Cys373 are joined by a disulfide bond.

Belongs to the small leucine-rich proteoglycan (SLRP) family. SLRP class II subfamily. Binds the basement membrane heparan sulfate proteoglycan perlecan and triple helical collagens type I and type II. Glycosylated; contains heparan sulfate. Connective tissue.

It is found in the secreted. The protein localises to the extracellular space. It localises to the extracellular matrix. May anchor basement membranes to the underlying connective tissue. In Homo sapiens (Human), this protein is Prolargin (PRELP).